Consider the following 65-residue polypeptide: Beta-defensin 106A (65 aa).

An N-terminal signal peptide occupies residues 1–20 (MRTFLFLFAVLFFLTPAKNE). Disulfide bonds link Cys-26-Cys-53, Cys-33-Cys-47, and Cys-37-Cys-54.

This sequence belongs to the beta-defensin family. Monomer. Interacts with CCR2 (via extracellular N-terminal region); this interaction may preferentially require specific tyrosine sulfation on CCR2.

It is found in the secreted. The protein resides in the membrane. In terms of biological role, has antibacterial activity. Acts as a ligand for C-C chemokine receptor CCR2. The protein is Beta-defensin 106A (DEFB106A) of Pongo pygmaeus (Bornean orangutan).